Here is a 1577-residue protein sequence, read N- to C-terminus: Pentafunctional AROM polypeptide (1577 aa).

A 3-dehydroquinate synthase region spans residues 1 to 392 (MASVGLEKVN…YGTSAHVVSD (392 aa)). NAD(+) contacts are provided by residues 80–83 (ETYK), 111–113 (GGV), and Asp116. Arg127 contributes to the 7-phospho-2-dehydro-3-deoxy-D-arabino-heptonate binding site. 136-137 (TS) is an NAD(+) binding site. 7-phospho-2-dehydro-3-deoxy-D-arabino-heptonate contacts are provided by Asp143 and Lys149. Lys158 is a binding site for NAD(+). Asn159 provides a ligand contact to 7-phospho-2-dehydro-3-deoxy-D-arabino-heptonate. Residues 176–179 (WLET) and Asn187 each bind NAD(+). Glu191 lines the Zn(2+) pocket. Residues 191-194 (EVIK) and Lys258 contribute to the 7-phospho-2-dehydro-3-deoxy-D-arabino-heptonate site. Residue Glu268 is the Proton acceptor; for 3-dehydroquinate synthase activity of the active site. Residues 272-276 (RNLLN) and His279 each bind 7-phospho-2-dehydro-3-deoxy-D-arabino-heptonate. A Zn(2+)-binding site is contributed by His279. The Proton acceptor; for 3-dehydroquinate synthase activity role is filled by His283. His295 and Lys364 together coordinate 7-phospho-2-dehydro-3-deoxy-D-arabino-heptonate. Residue His295 coordinates Zn(2+). The segment at 405–863 (VYPFTDVRSS…WDVLHSRLGA (459 aa)) is EPSP synthase. Cys845 acts as the For EPSP synthase activity in catalysis. Residues 882–1071 (VVLIGMRAAG…VPVKRSTFVC (190 aa)) are shikimate kinase. 886 to 893 (GMRAAGKS) contacts ATP. The tract at residues 1072–1284 (LTFQNLLPEM…AAPGQLTLRQ (213 aa)) is 3-dehydroquinase. The Proton acceptor; for 3-dehydroquinate dehydratase activity role is filled by His1189. Lys1218 acts as the Schiff-base intermediate with substrate; for 3-dehydroquinate dehydratase activity in catalysis. The interval 1297–1577 (PKKMFVVGSP…APVYDAVTQE (281 aa)) is shikimate dehydrogenase.

This sequence in the N-terminal section; belongs to the sugar phosphate cyclases superfamily. Dehydroquinate synthase family. It in the 2nd section; belongs to the EPSP synthase family. The protein in the 3rd section; belongs to the shikimate kinase family. In the 4th section; belongs to the type-I 3-dehydroquinase family. This sequence in the C-terminal section; belongs to the shikimate dehydrogenase family. Homodimer. It depends on Zn(2+) as a cofactor.

It localises to the cytoplasm. The catalysed reaction is 7-phospho-2-dehydro-3-deoxy-D-arabino-heptonate = 3-dehydroquinate + phosphate. It carries out the reaction 3-dehydroquinate = 3-dehydroshikimate + H2O. It catalyses the reaction shikimate + NADP(+) = 3-dehydroshikimate + NADPH + H(+). The enzyme catalyses shikimate + ATP = 3-phosphoshikimate + ADP + H(+). The catalysed reaction is 3-phosphoshikimate + phosphoenolpyruvate = 5-O-(1-carboxyvinyl)-3-phosphoshikimate + phosphate. It functions in the pathway metabolic intermediate biosynthesis; chorismate biosynthesis; chorismate from D-erythrose 4-phosphate and phosphoenolpyruvate: step 2/7. It participates in metabolic intermediate biosynthesis; chorismate biosynthesis; chorismate from D-erythrose 4-phosphate and phosphoenolpyruvate: step 3/7. Its pathway is metabolic intermediate biosynthesis; chorismate biosynthesis; chorismate from D-erythrose 4-phosphate and phosphoenolpyruvate: step 4/7. The protein operates within metabolic intermediate biosynthesis; chorismate biosynthesis; chorismate from D-erythrose 4-phosphate and phosphoenolpyruvate: step 5/7. It functions in the pathway metabolic intermediate biosynthesis; chorismate biosynthesis; chorismate from D-erythrose 4-phosphate and phosphoenolpyruvate: step 6/7. Its function is as follows. The AROM polypeptide catalyzes 5 consecutive enzymatic reactions in prechorismate polyaromatic amino acid biosynthesis. This chain is Pentafunctional AROM polypeptide, found in Eremothecium gossypii (strain ATCC 10895 / CBS 109.51 / FGSC 9923 / NRRL Y-1056) (Yeast).